Consider the following 886-residue polypeptide: 3',5'-cyclic-AMP phosphodiesterase 4A (886 aa).

The tract at residues 1–128 is disordered; it reads MEPPTVPSER…GRSPLDSQAS (128 aa). Phosphoserine is present on Ser-13. Residues 36–46 are compositionally biased toward low complexity; that stretch reads QPRTPIRIQQR. Residues 51-78 show a composition bias toward basic and acidic residues; that stretch reads SAERAERERQPHRPIERADAMDTSDRPG. Residues 93-104 are compositionally biased toward gly residues; that stretch reads TGTGSGGAGGGS. A phosphoserine mark is found at Gly-119 and Leu-123. A Phosphoserine; by MAPKAPK2 modification is found at Ser-152. Ser-157, Ser-165, and Ser-209 each carry phosphoserine. Positions 294-331 are disordered; that stretch reads KQNEVEIPSPTMKEREKQQAPRPRPSQPPPPPVPHLQP. The segment covering 315–328 has biased composition (pro residues); sequence RPRPSQPPPPPVPH. At Ser-346 the chain carries Phosphoserine. Positions 357–686 constitute a PDEase domain; sequence VKTDQEELLA…DWYYSAIRQS (330 aa). A Glycyl lysine isopeptide (Lys-Gly) (interchain with G-Cter in SUMO) cross-link involves residue Lys-358. The active-site Proton donor is the His-433. His-433 contributes to the 3',5'-cyclic AMP binding site. AMP is bound by residues His-433 and His-437. His-437, His-473, Asp-474, and Asp-591 together coordinate Zn(2+). 4 residues coordinate AMP: Asp-474, Asp-591, Gln-642, and Phe-645. Asp-474 provides a ligand contact to Mg(2+). Residue Asp-474 participates in Mn(2+) binding. Residues Gln-642 and Phe-645 each contribute to the 3',5'-cyclic AMP site. Disordered stretches follow at residues 682 to 705 and 866 to 886; these read AIRQ…PLPD and FGED…GDPT. Phosphoserine is present on residues Ser-686 and Ser-688. The segment covering 876–886 has biased composition (gly residues); that stretch reads PGGGGSGGDPT.

It belongs to the cyclic nucleotide phosphodiesterase family. PDE4 subfamily. In terms of assembly, interacts with LYN (via SH3 domain). Interacts with ARRB2. Zn(2+) serves as cofactor. The cofactor is Mg(2+). Requires Mn(2+) as cofactor. Post-translationally, proteolytically cleaved by CASP3. In terms of processing, phosphorylated at Ser-119 by PKA. In terms of tissue distribution, expressed in lymphoid cell subsets including CD8-positive T cells and T-helper 2 cells. Expressed in dendritic cells. As to expression, highly expressed in liver, stomach, testis, thyroid and adrenal glands and at a lower extent in placenta, kidney, pancreas, ovary, uterus and skin. Expressed in myeloid cell subsets including dendritic cells, monocytes, macrophages, eosinophils and mast cells. Expressed in natural killer cells. Expressed in bronchial smooth muscle. Expressed at high levels in the heart and small intestine. It is also found in the brain, kidney, spleen, colon, salivary gland, ovary and peripheral blood lymphocytes. In terms of tissue distribution, expressed predominantly in skeletal muscle and brain and at lower levels in the testis. Found in specific neuronal subpopulations including cortical pyramidal neurons, horn neurons in the spinal cord and Purkinje cells in cerebellum (at protein level).

The protein resides in the cytoplasm. The protein localises to the perinuclear region. Its subcellular location is the cell projection. It is found in the ruffle membrane. It localises to the cytosol. The protein resides in the membrane. It catalyses the reaction 3',5'-cyclic AMP + H2O = AMP + H(+). It functions in the pathway purine metabolism; 3',5'-cyclic AMP degradation; AMP from 3',5'-cyclic AMP: step 1/1. Inhibited by rolipram, cilomilast, Ro 20-1724, roflumilast and denbufylline. With respect to regulation, inhibited by rolipram. Its activity is regulated as follows. Inhibited by rolipram and cilomilast. Functionally, hydrolyzes the second messenger 3',5'-cyclic AMP (cAMP), which is a key regulator of many important physiological processes. Its function is as follows. Efficiently hydrolyzes cAMP. In terms of biological role, efficiently hydrolyzes cAMP. The phosphodiesterase activity is not affected by calcium, calmodulin or cyclic GMP (cGMP) levels. Does not hydrolyze cGMP. This is 3',5'-cyclic-AMP phosphodiesterase 4A (PDE4A) from Homo sapiens (Human).